The sequence spans 198 residues: Recombination protein RecR (198 aa).

The C4-type zinc-finger motif lies at 56–71 (CKICHSLTENEICDIC). One can recognise a Toprim domain in the interval 79-174 (HLLCVVESPA…HMTRIAQGVP (96 aa)).

Belongs to the RecR family.

Functionally, may play a role in DNA repair. It seems to be involved in an RecBC-independent recombinational process of DNA repair. It may act with RecF and RecO. The chain is Recombination protein RecR from Acinetobacter baylyi (strain ATCC 33305 / BD413 / ADP1).